The sequence spans 380 residues: Transcription factor RF2a (380 aa).

The tract at residues 1–57 is disordered; sequence MNREKSPIPGDGGDGLPPQATRRAGPPAAAAAAEYDISRMPDFPTRNPGHRRAHSEI. Residues 16 to 33 show a composition bias toward low complexity; it reads LPPQATRRAGPPAAAAAA. The segment at 56-108 is activation of RTBV promoter; sequence EILSLPEDLDLCAAGGGDGPSLSDENDEELFSMFLDVEKLNSTCGASSEAEAE. A bZIP domain is found at 181 to 244; it reads DPKRAKRIWA…SGLTTENSEL (64 aa). A basic motif region spans residues 183–204; that stretch reads KRAKRIWANRQSAARSKERKMR. Positions 209-244 are leucine-zipper; the sequence is LERKVQTLQTEATTLSAQLALLQRDTSGLTTENSEL. The interval 283–357 is interaction with TBP2; sequence GGMMMNFGGM…AQQLQQAARD (75 aa). The span at 326-355 shows a compositional bias: low complexity; sequence QAQQQQVLHPQHQQQQPLHPLQAQQLQQAA. Residues 326–380 form a disordered region; the sequence is QAQQQQVLHPQHQQQQPLHPLQAQQLQQAARDLKMKSPMGGQSQWGDGKSGSSGN.

Belongs to the bZIP family. In terms of assembly, binds DNA as a homodimer or as a heterodimer with RF2b. The heterodimer binds stronger to DNA than the homodimer. Interacts with TBP2. Expressed at high levels in levels in leaf sheath, moderate levels in leaf blade, but not in roots. Predominantly expressed in vascular tissues.

Its subcellular location is the nucleus. Transcription factor probably involved in vascular development and shoot tissue organization. Binds to the DNA sequence 5'-CCGAGTGTGCCCCTGG-3' present in the promoter region Box II of the phloem-specific rice tungro bacilliform virus (RTBV) promoter. May regulate tissue-specific expression of the RTBV promoter and virus replication. This chain is Transcription factor RF2a (RF2a), found in Oryza sativa subsp. japonica (Rice).